An 855-amino-acid polypeptide reads, in one-letter code: Inactive rhomboid protein 1 (855 aa).

A disordered region spans residues 1–35 (MSEARRDSTSSLQRKKPPWLKLDIPSAAPATAEEP). Topologically, residues 1-411 (MSEARRDSTS…HRPFFTYWLT (411 aa)) are cytoplasmic. Residues 25–35 (PSAAPATAEEP) show a composition bias toward low complexity. Residues Ser-76 and Ser-176 each carry the phosphoserine modification. A phosphothreonine mark is found at Thr-180 and Thr-183. Position 390 is a phosphoserine (Ser-390). A helical membrane pass occupies residues 412 to 432 (FVHSLVTILAVCIYGIAPVGF). Residues 433–655 (SQHETVDSVL…NPEVPDQFYR (223 aa)) are Lumenal-facing. Residue Asn-583 is glycosylated (N-linked (GlcNAc...) asparagine). A helical transmembrane segment spans residues 656 to 676 (LWLSLFLHAGILHCLVSICFQ). Residues 677–691 (MTVLRDLEKLAGWHR) are Cytoplasmic-facing. The helical transmembrane segment at 692 to 712 (IAIIYLLSGVTGNLASAIFLP) threads the bilayer. The Lumenal portion of the chain corresponds to 713–714 (YR). A helical transmembrane segment spans residues 715–735 (AEVGPAGSQFGILACLFVELF). Residues 736-746 (QSWQILARPWR) lie on the Cytoplasmic side of the membrane. Residues 747–767 (AFFKLLAVVLFLFTFGLLPWI) form a helical membrane-spanning segment. Over 768–772 (DNFAH) the chain is Lumenal. Residues 773–793 (ISGFISGLFLSFAFLPYISFG) form a helical membrane-spanning segment. Residues 794-803 (KFDLYRKRCQ) are Cytoplasmic-facing. The helical transmembrane segment at 804–824 (IIVFQVVFLGLLAGLVVLFYV) threads the bilayer. Residues 825 to 855 (YPVRCEWCEFLTCIPFTDKFCEKYELDAQLH) lie on the Lumenal side of the membrane.

This sequence belongs to the peptidase S54 family. Homodimer, or homooligomer. Interacts with TGFA and HBEGF. Interacts with EGF; may retain EGF in the endoplasmic reticulum and regulates its degradation through the endoplasmic reticulum-associated degradation (ERAD). Interacts (via cytoplasmic N-terminus) with FRMD8/iTAP; this interaction leads to mutual protein stabilization. Interacts with ADAM17/TACE.

It is found in the endoplasmic reticulum membrane. The protein localises to the golgi apparatus membrane. In terms of biological role, regulates ADAM17 protease, a sheddase of the epidermal growth factor (EGF) receptor ligands and TNF, thereby plays a role in sleep, cell survival, proliferation, migration and inflammation. Does not exhibit any protease activity on its own. The polypeptide is Inactive rhomboid protein 1 (RHBDF1) (Callithrix jacchus (White-tufted-ear marmoset)).